The primary structure comprises 130 residues: Small ribosomal subunit protein uS9 (130 aa).

Residues 105–130 form a disordered region; sequence TRDSRMKERKKPGLKGARRAPQFSKR. Basic residues predominate over residues 111–130; sequence KERKKPGLKGARRAPQFSKR.

Belongs to the universal ribosomal protein uS9 family.

The polypeptide is Small ribosomal subunit protein uS9 (Listeria welshimeri serovar 6b (strain ATCC 35897 / DSM 20650 / CCUG 15529 / CIP 8149 / NCTC 11857 / SLCC 5334 / V8)).